A 105-amino-acid chain; its full sequence is Chloroacetanilide N-alkylformylase 1, ferredoxin component (105 aa).

The 2Fe-2S ferredoxin-type domain maps to 2 to 105; the sequence is PTIIVTTRDG…GLRVAIAPED (104 aa). Positions 40, 46, 49, and 86 each coordinate [2Fe-2S] cluster.

Belongs to the adrenodoxin/putidaredoxin family. The chloroacetanilide N-alkylformylase multicomponent enzyme system is composed of an oxygenase component (CndA) and an electron transfer component formed by a ferredoxin reductase (CndC1) and a ferredoxin (CndB1). In vitro, chloroacetanilide N-alkylformylase assays in which CndB1 is substituted for CndB2 demonstrate that the two enzymes possess nearly identical activities. [2Fe-2S] cluster is required as a cofactor.

Its function is as follows. Component of the chloroacetanilide N-alkylformylase multicomponent enzyme system involved in the degradation of chloroacetanilide herbicides (N-alkoxyalkyl-N-chloroacetyl-substituted aniline derivatives). In vitro, functions as an intermediate electron transfer protein. The sequence is that of Chloroacetanilide N-alkylformylase 1, ferredoxin component from Rhizorhabdus wittichii (strain DC-6 / KACC 16600) (Sphingomonas wittichii).